The primary structure comprises 397 residues: Purine ribonucleoside efflux pump NepI (397 aa).

Residues 1 to 21 (MNENIAEKFRADGVARPNWSA) lie on the Cytoplasmic side of the membrane. A helical membrane pass occupies residues 22 to 42 (VFAVAFCVACLITVEFLPVSL). Residues 43–54 (LTPMAQDLGISE) are Periplasmic-facing. Residues 55-75 (GVAGQSVTVTAFVAMFSSLFI) form a helical membrane-spanning segment. Over 76–85 (TQIIQATDRR) the chain is Cytoplasmic. Residues 86-106 (YIVILFAVLLTASCLMVSFAN) form a helical membrane-spanning segment. Residue Ser107 is a topological domain, periplasmic. Residues 108–128 (FTLLLLGRACLGLALGGFWAI) form a helical membrane-spanning segment. Residues 129-147 (SASLTMRLVPARTVPKALS) are Cytoplasmic-facing. Residues 148–168 (VIFGAVSIALVIAAPLGSFLG) form a helical membrane-spanning segment. Residues 169-175 (GIIGWRN) lie on the Periplasmic side of the membrane. Residues 176 to 196 (VFNAAAVMGVLCVIWVVKSLP) form a helical membrane-spanning segment. The Cytoplasmic segment spans residues 197–215 (SLPGEPSHQKQNMFSLLQR). A helical membrane pass occupies residues 216–236 (PGVMAGMIAIFMSFAGQFAFF). Topologically, residues 237–255 (TYIRPVYMNLAGFDVDGLT) are periplasmic. The chain crosses the membrane as a helical span at residues 256–276 (LVLLSFGIASFVGTSFSSYVL). The Cytoplasmic segment spans residues 277–281 (KRSVK). A helical transmembrane segment spans residues 282–302 (LALAGAPLLLALSALTLIVWG). Over 303–305 (SDK) the chain is Periplasmic. Residues 306-326 (TVAAAIAIIWGLAFALVPVGW) form a helical membrane-spanning segment. Over 327-343 (STWITRSLADQAEKAGS) the chain is Cytoplasmic. Residues 344-364 (IQVAVIQLANTCGAAVGGYAL) form a helical membrane-spanning segment. Residues 365-366 (DN) are Periplasmic-facing. Residues 367 to 387 (FGLLSPLALSGGLMLLTALVV) form a helical membrane-spanning segment. The Cytoplasmic portion of the chain corresponds to 388–397 (AAKVRITPMS).

It belongs to the major facilitator superfamily. DHA1 family. NepI (TC 2.A.1.2.26) subfamily.

The protein localises to the cell inner membrane. The enzyme catalyses inosine(in) + H(+)(out) = inosine(out) + H(+)(in). The catalysed reaction is guanosine(in) + H(+)(out) = guanosine(out) + H(+)(in). Functionally, involved in the efflux of purine ribonucleosides, such as inosine and guanosine. The polypeptide is Purine ribonucleoside efflux pump NepI (Salmonella paratyphi A (strain ATCC 9150 / SARB42)).